The sequence spans 301 residues: Mycothiol acetyltransferase (301 aa).

2 N-acetyltransferase domains span residues 7 to 150 and 152 to 301; these read VDWQ…PPVD and VRFA…AVEG. Aspartate 39 is a 1D-myo-inositol 2-(L-cysteinylamino)-2-deoxy-alpha-D-glucopyranoside binding site. Acetyl-CoA contacts are provided by residues 80 to 82 and 88 to 93; these read LVV and RRGIGS. Glutamate 179, lysine 220, and glutamate 228 together coordinate 1D-myo-inositol 2-(L-cysteinylamino)-2-deoxy-alpha-D-glucopyranoside. Residue 232–234 participates in acetyl-CoA binding; the sequence is VGV. 1D-myo-inositol 2-(L-cysteinylamino)-2-deoxy-alpha-D-glucopyranoside is bound at residue tyrosine 271. Residue 276 to 281 coordinates acetyl-CoA; sequence NTAAVK.

This sequence belongs to the acetyltransferase family. MshD subfamily. In terms of assembly, monomer.

It catalyses the reaction 1D-myo-inositol 2-(L-cysteinylamino)-2-deoxy-alpha-D-glucopyranoside + acetyl-CoA = mycothiol + CoA + H(+). Functionally, catalyzes the transfer of acetyl from acetyl-CoA to desacetylmycothiol (Cys-GlcN-Ins) to form mycothiol. The protein is Mycothiol acetyltransferase of Mycolicibacterium vanbaalenii (strain DSM 7251 / JCM 13017 / BCRC 16820 / KCTC 9966 / NRRL B-24157 / PYR-1) (Mycobacterium vanbaalenii).